The chain runs to 467 residues: Sugar transporter ERD6-like 11 (467 aa).

A run of 12 helical transmembrane segments spans residues Ile26–Cys46, Phe75–Gly95, Phe105–Leu125, Ile128–Ile148, Gly155–Thr177, Val183–Pro203, Leu266–Tyr286, Leu301–Val321, Pro328–Phe348, Leu359–Ile379, Ile402–Phe422, and Gly428–Val448.

The protein belongs to the major facilitator superfamily. Sugar transporter (TC 2.A.1.1) family.

The protein localises to the membrane. In terms of biological role, sugar transporter. The protein is Sugar transporter ERD6-like 11 of Arabidopsis thaliana (Mouse-ear cress).